The sequence spans 148 residues: Ubiquitin-conjugating enzyme E2 5B (148 aa).

The region spanning 1 to 147 (MASKRILKEL…ARSWTQKYAM (147 aa)) is the UBC core domain. Cysteine 85 (glycyl thioester intermediate) is an active-site residue.

The protein belongs to the ubiquitin-conjugating enzyme family.

The enzyme catalyses S-ubiquitinyl-[E1 ubiquitin-activating enzyme]-L-cysteine + [E2 ubiquitin-conjugating enzyme]-L-cysteine = [E1 ubiquitin-activating enzyme]-L-cysteine + S-ubiquitinyl-[E2 ubiquitin-conjugating enzyme]-L-cysteine.. Its pathway is protein modification; protein ubiquitination. In terms of biological role, E2 conjugating enzyme that associates with the E3 ubiquitin-protein ligase EL5 to mediate ubiquitination of target proteins. The sequence is that of Ubiquitin-conjugating enzyme E2 5B (UBC5B) from Oryza sativa subsp. japonica (Rice).